We begin with the raw amino-acid sequence, 238 residues long: Protein MIS12 homolog (238 aa).

Positions 117 to 149 (ELDAELDSLRDKLNVVGKRSVELDSELQALERS) form a coiled coil.

It belongs to the mis12 family.

It is found in the chromosome. The protein localises to the centromere. It localises to the kinetochore. Functionally, constitutive component of kinetochores that is essential for proper cell division during mitotic cell cycle. May play a role in the modulation of centromere during meiosis. The chain is Protein MIS12 homolog from Arabidopsis thaliana (Mouse-ear cress).